An 876-amino-acid polypeptide reads, in one-letter code: Valine--tRNA ligase (876 aa).

A 'HIGH' region motif is present at residues proline 44–histidine 54. The 'KMSKS' region signature appears at lysine 520 to serine 524. Lysine 523 serves as a coordination point for ATP. A coiled-coil region spans residues leucine 805–alanine 876.

The protein belongs to the class-I aminoacyl-tRNA synthetase family. ValS type 1 subfamily. Monomer.

The protein localises to the cytoplasm. It carries out the reaction tRNA(Val) + L-valine + ATP = L-valyl-tRNA(Val) + AMP + diphosphate. Catalyzes the attachment of valine to tRNA(Val). As ValRS can inadvertently accommodate and process structurally similar amino acids such as threonine, to avoid such errors, it has a 'posttransfer' editing activity that hydrolyzes mischarged Thr-tRNA(Val) in a tRNA-dependent manner. The chain is Valine--tRNA ligase from Staphylococcus aureus (strain MRSA252).